The chain runs to 239 residues: tRNA (guanine-N(1)-)-methyltransferase (239 aa).

S-adenosyl-L-methionine is bound by residues G108 and 127–132; that span reads LGDYVL.

Belongs to the RNA methyltransferase TrmD family. In terms of assembly, homodimer.

The protein resides in the cytoplasm. The catalysed reaction is guanosine(37) in tRNA + S-adenosyl-L-methionine = N(1)-methylguanosine(37) in tRNA + S-adenosyl-L-homocysteine + H(+). In terms of biological role, specifically methylates guanosine-37 in various tRNAs. This is tRNA (guanine-N(1)-)-methyltransferase from Streptococcus pneumoniae (strain JJA).